We begin with the raw amino-acid sequence, 449 residues long: Telomere resolvase ResT (449 aa).

No cofactors were found to be necessary. serves as cofactor.

It localises to the cytoplasm. The protein localises to the nucleoid. Catalyzes the conservative, sequence-specific DNA breakage and reunion reaction that generates two hairpin telomeres from a replicated telomere substrate. Breaks two phosphodiester bonds in a single DNA duplex and joins each end with the opposite DNA strand to form covalently closed hairpin telomeres. In vitro relaxed-circular, open-circular and linearized plasmids, but not supercoiled DNA, are all substrates. Cleavage is position-dependent relative to conserved sequence elements. In Borreliella burgdorferi (strain ATCC 35210 / DSM 4680 / CIP 102532 / B31) (Borrelia burgdorferi), this protein is Telomere resolvase ResT.